Here is a 504-residue protein sequence, read N- to C-terminus: Maturase K (504 aa).

The protein belongs to the intron maturase 2 family. MatK subfamily.

The protein localises to the plastid. The protein resides in the chloroplast. In terms of biological role, usually encoded in the trnK tRNA gene intron. Probably assists in splicing its own and other chloroplast group II introns. This is Maturase K from Cardamine amara (Large bitter-cress).